The sequence spans 352 residues: B1 bradykinin receptor (352 aa).

Residues 1 to 41 (MASWPPLELQSSNQSQLFPQNATACDNAPEAWDLLHRVLPT) are Extracellular-facing. 2 N-linked (GlcNAc...) asparagine glycosylation sites follow: Asn-13 and Asn-21. A helical membrane pass occupies residues 42–62 (FIISICSFGLLGNLFVLLVFL). The Cytoplasmic segment spans residues 63-72 (LPRRRLNVAE). A helical transmembrane segment spans residues 73-93 (IYLANLAASDLVFVLGLPFWA). Topologically, residues 94 to 110 (ENIWNQFNWPFGALLCR) are extracellular. Cys-109 and Cys-188 are disulfide-bonded. Residues 111 to 131 (GINGVIKANLFISIFLVVAIS) traverse the membrane as a helical segment. The Cytoplasmic segment spans residues 132–153 (QDRYCLLVHPMASRRRQRRRQA). A helical membrane pass occupies residues 154–174 (RVTCVLIWVVGGLLSIPTFLL). Residues 175 to 206 (RSIQAVPDLNITACILLLPHEAWHFARIVELN) lie on the Extracellular side of the membrane. N-linked (GlcNAc...) asparagine glycosylation is present at Asn-184. The chain crosses the membrane as a helical span at residues 207 to 227 (ILAFLLPLAAIVFFNYHILAS). At 228 to 250 (LRGREEVSRTRCGGRKDSKTTAL) the chain is on the cytoplasmic side. The chain crosses the membrane as a helical span at residues 251–271 (ILTLVVAFLVCWAPYHFFAFL). Residues 272–294 (EFLFQVQAIRSCFWEDFIDLGLQ) lie on the Extracellular side of the membrane. The helical transmembrane segment at 295–315 (LANFLAFTNSSLNPVIYVFVG) threads the bilayer. The Cytoplasmic portion of the chain corresponds to 316-352 (RLFRTKVWELYKQCTPKSLAPISSSHRKEIFQLFWRN). A lipid anchor (S-palmitoyl cysteine) is attached at Cys-329.

It belongs to the G-protein coupled receptor 1 family. Bradykinin receptor subfamily. BDKRB1 sub-subfamily.

Its subcellular location is the cell membrane. In terms of biological role, this is a receptor for bradykinin. Could be a factor in chronic pain and inflammation. The polypeptide is B1 bradykinin receptor (BDKRB1) (Chlorocebus pygerythrus (Vervet monkey)).